The following is a 253-amino-acid chain: Matrix protein (253 aa).

A disordered region spans residues 1 to 26 (MLSRIKQGIKTKRSSSSSSSRSKTGD). Positions 55 to 58 (PTAP) match the PTAP/PSAP motif motif.

Homomultimer. Interacts with viral nucleocapsid. Interacts with host TSG101.

It localises to the virion membrane. The protein localises to the host endomembrane system. It is found in the host nucleus membrane. Functionally, plays a major role in assembly and budding of virion, by recruiting cellular partners of the ESCRT complexes that play a key role in releasing the budding particle from the host membrane. Condensates the ribonucleocapsid core during virus assembly. This Bos taurus (Bovine) protein is Matrix protein (M).